We begin with the raw amino-acid sequence, 397 residues long: CCA-adding enzyme (397 aa).

Residues glycine 8 and arginine 11 each contribute to the ATP site. The CTP site is built by glycine 8 and arginine 11. Mg(2+) contacts are provided by glutamate 21 and aspartate 23. ATP-binding residues include arginine 91, arginine 137, and arginine 140. The CTP site is built by arginine 91, arginine 137, and arginine 140. The HD domain occupies 213–324; that stretch reads NLDAAIATLK…LALFNGCDAW (112 aa).

This sequence belongs to the tRNA nucleotidyltransferase/poly(A) polymerase family. Bacterial CCA-adding enzyme type 2 subfamily. It depends on Mg(2+) as a cofactor.

It catalyses the reaction a tRNA precursor + 2 CTP + ATP = a tRNA with a 3' CCA end + 3 diphosphate. The enzyme catalyses a tRNA with a 3' CCA end + 2 CTP + ATP = a tRNA with a 3' CCACCA end + 3 diphosphate. Catalyzes the addition and repair of the essential 3'-terminal CCA sequence in tRNAs without using a nucleic acid template. Adds these three nucleotides in the order of C, C, and A to the tRNA nucleotide-73, using CTP and ATP as substrates and producing inorganic pyrophosphate. tRNA 3'-terminal CCA addition is required both for tRNA processing and repair. Also involved in tRNA surveillance by mediating tandem CCA addition to generate a CCACCA at the 3' terminus of unstable tRNAs. While stable tRNAs receive only 3'-terminal CCA, unstable tRNAs are marked with CCACCA and rapidly degraded. This chain is CCA-adding enzyme, found in Alteromonas mediterranea (strain DSM 17117 / CIP 110805 / LMG 28347 / Deep ecotype).